The sequence spans 204 residues: Recombination protein RecR (204 aa).

The C4-type zinc finger occupies 61 to 76 (CACCNTFSETQVCSTC). The 100-residue stretch at 84-183 (SLLCIVETPA…KVTRIARGIP (100 aa)) folds into the Toprim domain.

The protein belongs to the RecR family.

In terms of biological role, may play a role in DNA repair. It seems to be involved in an RecBC-independent recombinational process of DNA repair. It may act with RecF and RecO. This chain is Recombination protein RecR, found in Polynucleobacter necessarius subsp. necessarius (strain STIR1).